A 347-amino-acid polypeptide reads, in one-letter code: Dihydroorotate dehydrogenase (quinone) (347 aa).

Residues 62–66 (AGLDK) and T86 contribute to the FMN site. K66 provides a ligand contact to substrate. Residue 111 to 115 (NRMGF) coordinates substrate. The FMN site is built by N142 and N175. N175 provides a ligand contact to substrate. S178 functions as the Nucleophile in the catalytic mechanism. N180 is a binding site for substrate. Residues K220 and T248 each contribute to the FMN site. Residue 249–250 (NT) coordinates substrate. FMN contacts are provided by residues G271, G300, and 321–322 (YS).

It belongs to the dihydroorotate dehydrogenase family. Type 2 subfamily. Monomer. The cofactor is FMN.

Its subcellular location is the cell membrane. The enzyme catalyses (S)-dihydroorotate + a quinone = orotate + a quinol. It functions in the pathway pyrimidine metabolism; UMP biosynthesis via de novo pathway; orotate from (S)-dihydroorotate (quinone route): step 1/1. Functionally, catalyzes the conversion of dihydroorotate to orotate with quinone as electron acceptor. The polypeptide is Dihydroorotate dehydrogenase (quinone) (Dechloromonas aromatica (strain RCB)).